A 193-amino-acid chain; its full sequence is Flagellin B3 (193 aa).

The propeptide occupies 1-12 (MFEFITDEDERG).

Belongs to the archaeal flagellin family. Glycosylated.

The protein localises to the archaeal flagellum. Flagellin is the subunit protein which polymerizes to form the filaments of archaeal flagella. The protein is Flagellin B3 (flaB3) of Halobacterium salinarum (strain ATCC 700922 / JCM 11081 / NRC-1) (Halobacterium halobium).